The chain runs to 385 residues: Protein pelota homolog (385 aa).

A Glycyl lysine isopeptide (Lys-Gly) (interchain with G-Cter in SUMO2) cross-link involves residue lysine 162. Phosphoserine occurs at positions 374, 380, 381, and 382.

Belongs to the eukaryotic release factor 1 family. Pelota subfamily. Component of the Pelota-HBS1L complex, also named Dom34-Hbs1 complex, composed of PELO and HBS1L. Interacts with PINK1. Interacts with ABCE1. Interacts with CNOT4. The cofactor is a divalent metal cation. In terms of tissue distribution, ubiquitously expressed.

The protein localises to the cytoplasm. Its function is as follows. Component of the Pelota-HBS1L complex, a complex that recognizes stalled ribosomes and triggers the No-Go Decay (NGD) pathway. In the Pelota-HBS1L complex, PELO recognizes ribosomes stalled at the 3' end of an mRNA and engages stalled ribosomes by destabilizing mRNA in the mRNA channel. Following mRNA extraction from stalled ribosomes by the SKI complex, the Pelota-HBS1L complex promotes recruitment of ABCE1, which drives the disassembly of stalled ribosomes, followed by degradation of damaged mRNAs as part of the NGD pathway. As part of the PINK1-regulated signaling, upon mitochondrial damage is recruited to the ribosome/mRNA-ribonucleoprotein complex associated to mitochondrial outer membrane thereby enabling the recruitment of autophagy receptors and induction of mitophagy. This is Protein pelota homolog from Mus musculus (Mouse).